Consider the following 253-residue polypeptide: Aminoglycoside nucleotidyltransferase (4') (253 aa).

Residues 1-127 (MNGPIIMTRE…KVYQTAKSVE (127 aa)) form an N-terminal domain region. Serine 39, arginine 42, serine 49, aspartate 50, and glutamate 52 together coordinate ATP. Residues aspartate 50 and glutamate 52 each contribute to the Mg(2+) site. Neomycin B contacts are provided by glutamate 52 and glutamate 67. Residues glutamate 67, lysine 74, glutamate 76, glutamate 141, and glutamate 145 each coordinate kanamycin A. A C-terminal domain region spans residues 128–241 (AQTFHDAICA…NGIQEWTERH (114 aa)). ATP is bound by residues glutamate 145, lysine 149, and threonine 187. Glutamate 145 is a binding site for Mg(2+). The active-site Proton acceptor is the glutamate 145.

In terms of assembly, homodimer. The cofactor is Mg(2+).

It catalyses the reaction amikacin + ATP = 4'-adenylylamikacin + diphosphate. The enzyme catalyses kanamycin A + ATP = 4'-adenylylkanamycin A + diphosphate. It carries out the reaction neomycin B + ATP = 4'-adenylylneomycin B + diphosphate. The catalysed reaction is paromomycin + ATP = 4'-adenylylparomomycin + diphosphate. It catalyses the reaction ribostamycin + ATP = 4'-adenylylribostamycin + diphosphate. The enzyme catalyses tobramycin + ATP = 4'-adenylyltobramycin + diphosphate. It carries out the reaction kanamycin A + CTP = 4'-cytidylylkanamycin A + diphosphate. The catalysed reaction is kanamycin A + GTP = 4'-guanylylkanamycin A + diphosphate. It catalyses the reaction kanamycin A + ITP = 4'-inosinylylkanamycin A + diphosphate. The enzyme catalyses dTTP + kanamycin A = 4'-thymidylylkanamycin A + diphosphate. It carries out the reaction kanamycin A + UTP = 4'-uridylylkanamycin A + diphosphate. The catalysed reaction is kanamycin A + dATP = 4'-(2'-deoxyadenylyl)kanamycin A + diphosphate. It catalyses the reaction kanamycin A + dCTP = 4'-(2'-deoxycytidylyl)kanamycin A + diphosphate. The enzyme catalyses kanamycin A + dGTP = 4'-(2'-deoxyguanylyl)kanamycin A + diphosphate. It carries out the reaction dUTP + kanamycin A = 4'-(2'-deoxyuridylyl)kanamycin A + diphosphate. The catalysed reaction is amikacin + GTP = 4'-guanylylamikacin + diphosphate. It catalyses the reaction amikacin + ITP = 4'-inosinylylamikacin + diphosphate. The enzyme catalyses amikacin + CTP = 4'-cytidylylamikacin + diphosphate. It carries out the reaction amikacin + UTP = 4'-uridylylamikacin + diphosphate. The catalysed reaction is amikacin + dTTP = 4'-thymidylylamikacin + diphosphate. Its function is as follows. Inactivates aminoglycoside antibiotics such as kanamycin by catalyzing the transfer of a nucleotidyl group from a wide variety of nucleoside triphosphates ((d)ATP, (d)CTP, (d)GTP, ITP, TTP and (d)UTP) to the 4'-hydroxyl group of the aminoglycoside. In vitro, antibiotics without the 4'-hydroxyl but possessing a 4''-hydroxyl group (e.g. sisomicin and gentamicin) are also modifed but with poor specificity. The 3' position of the NTP ribose ring does not tolerate large substitutions (e.g. ddATP) and dNTPs and TTP are better substrates than their NTP counterparts. A short (2.35 Angstrom) hydrogen bond initially facilitates tight binding of the substrate (between Glu-52 and antibiotic) that is subsequently disrupted by the assembly of the active ternary complex. This enables the release of products post-catalysis, a 'catch and release' mechanism. In Staphylococcus aureus, this protein is Aminoglycoside nucleotidyltransferase (4') (knt).